A 1150-amino-acid chain; its full sequence is ATP-dependent helicase/deoxyribonuclease subunit B (1150 aa).

Position 8–15 (8–15) interacts with ATP; the sequence is GRSGSGKS. Residues cysteine 789, cysteine 1108, cysteine 1111, and cysteine 1117 each contribute to the [4Fe-4S] cluster site.

The protein belongs to the helicase family. AddB/RexB type 1 subfamily. Heterodimer of AddA and AddB. It depends on Mg(2+) as a cofactor. The cofactor is [4Fe-4S] cluster.

Its function is as follows. The heterodimer acts as both an ATP-dependent DNA helicase and an ATP-dependent, dual-direction single-stranded exonuclease. Recognizes the chi site generating a DNA molecule suitable for the initiation of homologous recombination. The AddB subunit has 5' -&gt; 3' nuclease activity but not helicase activity. The sequence is that of ATP-dependent helicase/deoxyribonuclease subunit B from Clostridium tetani (strain Massachusetts / E88).